The sequence spans 273 residues: 2,3,4,5-tetrahydropyridine-2,6-dicarboxylate N-succinyltransferase (273 aa).

2 residues coordinate substrate: arginine 104 and aspartate 141.

The protein belongs to the transferase hexapeptide repeat family. In terms of assembly, homotrimer.

It is found in the cytoplasm. The catalysed reaction is (S)-2,3,4,5-tetrahydrodipicolinate + succinyl-CoA + H2O = (S)-2-succinylamino-6-oxoheptanedioate + CoA. Its pathway is amino-acid biosynthesis; L-lysine biosynthesis via DAP pathway; LL-2,6-diaminopimelate from (S)-tetrahydrodipicolinate (succinylase route): step 1/3. This chain is 2,3,4,5-tetrahydropyridine-2,6-dicarboxylate N-succinyltransferase, found in Buchnera aphidicola subsp. Schizaphis graminum (strain Sg).